The chain runs to 336 residues: Ketol-acid reductoisomerase (NADP(+)) (336 aa).

One can recognise a KARI N-terminal Rossmann domain in the interval 3-183 (AKMYYDRDVD…GCTKAGVLET (181 aa)). NADP(+) contacts are provided by residues 26–29 (YGSQ), Arg-49, Ser-52, Ser-54, and 84–87 (DEQQ). His-109 is an active-site residue. Gly-135 contributes to the NADP(+) binding site. Residues 184–329 (TFKEETETDL…KELRDQMPFI (146 aa)) enclose the KARI C-terminal knotted domain. Positions 192, 196, 228, and 232 each coordinate Mg(2+). Residue Ser-253 coordinates substrate.

It belongs to the ketol-acid reductoisomerase family. The cofactor is Mg(2+).

The catalysed reaction is (2R)-2,3-dihydroxy-3-methylbutanoate + NADP(+) = (2S)-2-acetolactate + NADPH + H(+). The enzyme catalyses (2R,3R)-2,3-dihydroxy-3-methylpentanoate + NADP(+) = (S)-2-ethyl-2-hydroxy-3-oxobutanoate + NADPH + H(+). The protein operates within amino-acid biosynthesis; L-isoleucine biosynthesis; L-isoleucine from 2-oxobutanoate: step 2/4. It functions in the pathway amino-acid biosynthesis; L-valine biosynthesis; L-valine from pyruvate: step 2/4. Functionally, involved in the biosynthesis of branched-chain amino acids (BCAA). Catalyzes an alkyl-migration followed by a ketol-acid reduction of (S)-2-acetolactate (S2AL) to yield (R)-2,3-dihydroxy-isovalerate. In the isomerase reaction, S2AL is rearranged via a Mg-dependent methyl migration to produce 3-hydroxy-3-methyl-2-ketobutyrate (HMKB). In the reductase reaction, this 2-ketoacid undergoes a metal-dependent reduction by NADPH to yield (R)-2,3-dihydroxy-isovalerate. This chain is Ketol-acid reductoisomerase (NADP(+)), found in Deinococcus radiodurans (strain ATCC 13939 / DSM 20539 / JCM 16871 / CCUG 27074 / LMG 4051 / NBRC 15346 / NCIMB 9279 / VKM B-1422 / R1).